A 270-amino-acid polypeptide reads, in one-letter code: MENPVIIYVISDAIGETAQHIIRAVTAQFSLNKPADIRRHAFIRDESALLETLEEAKATDGIVVQTLVQAKLAEYATNFCVQNNIPNVDLLHTLTAAVEAKTGLKSKQDPGNMRRLDSNYFDRIAAIEFAVKYDDCKDPRGLLDADIVLVGVSRTSKTPLSSFLANQNWKVANVPLVPEIPIPAELFQIPAERIIGLTTTPEKLAQIRKVRLRSIGLDEASSYSSEKRILEELEYGYDTFKKLGCQVIHVEDKAIEETAALITEIITSYH.

151–158 (GVSRTSKT) contacts ADP.

It belongs to the pyruvate, phosphate/water dikinase regulatory protein family. PDRP subfamily.

The catalysed reaction is N(tele)-phospho-L-histidyl/L-threonyl-[pyruvate, phosphate dikinase] + ADP = N(tele)-phospho-L-histidyl/O-phospho-L-threonyl-[pyruvate, phosphate dikinase] + AMP + H(+). It catalyses the reaction N(tele)-phospho-L-histidyl/O-phospho-L-threonyl-[pyruvate, phosphate dikinase] + phosphate + H(+) = N(tele)-phospho-L-histidyl/L-threonyl-[pyruvate, phosphate dikinase] + diphosphate. Bifunctional serine/threonine kinase and phosphorylase involved in the regulation of the pyruvate, phosphate dikinase (PPDK) by catalyzing its phosphorylation/dephosphorylation. The polypeptide is Putative pyruvate, phosphate dikinase regulatory protein 2 (Listeria monocytogenes serovar 1/2a (strain ATCC BAA-679 / EGD-e)).